The following is a 4095-amino-acid chain: Protein adenylyltransferase and cysteine protease IbpA (4095 aa).

Residues 1 to 97 (MNKNCYKLIF…MVAAPNFAQS (97 aa)) form the signal peptide. Binds bovine IgG2 Fc regions lie at residues 972 to 1515 (SERI…FVKA) and 1116 to 1255 (SEVQ…FLKE). Disordered regions lie at residues 1082-1117 (EVSD…LPSE), 1130-1154 (KEKA…LQSD), 1204-1223 (QEAL…AKAK), 1625-1652 (TVSH…TGFT), and 1705-1732 (EEDE…QKEE). Positions 1087 to 1096 (WERDPDEPDE) are enriched in acidic residues. Basic and acidic residues-rich tracts occupy residues 1097–1117 (PDYK…LPSE) and 1130–1139 (KEKAQQKRQA). Positions 1116–1247 (SEVQDKLRQK…AKDHQIEEAL (132 aa)) form a coiled coil. The segment covering 1716-1727 (KAKAAPDATDNA) has biased composition (low complexity). 12 tandem repeats follow at residues 2250-2271 (YSTL…SDDI), 2272-2295 (YSLL…AEGA), 2296-2317 (YDLL…SDDL), 2318-2343 (YSTV…AAGP), 2344-2365 (YSLL…GEGP), 2366-2387 (YSLL…SNST), 2388-2413 (YSTV…VAGP), 2414-2435 (YSLL…GEGP), 2436-2457 (YSLL…SDSP), 2458-2483 (YSTV…VAGP), 2484-2505 (YSLL…GEGP), and 2506-2527 (YSLL…SDSP). Residues 2250–2527 (YSTLGDQNAN…RTLGGESDSP (278 aa)) are 12 X 22 AA approximate repeats. Composition is skewed to polar residues over residues 2592–2611 (SDTE…TRNA) and 2794–2803 (TAPQKTSPVK). Disordered stretches follow at residues 2592 to 2617 (SDTE…PLPP), 2765 to 2809 (TIGE…SAEG), 2825 to 2894 (AKGQ…SPKR), 2914 to 2933 (LKSK…EPIY), 2943 to 3033 (LARA…KSED), and 3049 to 3069 (NKSQ…PNYD). Residues 2880–2889 (PFPSEFSSEP) are compositionally biased toward low complexity. Composition is skewed to polar residues over residues 2977-2996 (SNLS…QSVA) and 3005-3018 (AESN…QKLQ). Residues 3052–3062 (QAKEAKSEQET) show a composition bias toward basic and acidic residues. The 138-residue stretch at 3218-3355 (LTVEMIEKLN…AEVVKEFLTE (138 aa)) folds into the Fido 1 domain. The segment at 3222–4095 (MIEKLNHGLR…FNVVNYKKNN (874 aa)) is yopT-like. Residues 3354 to 3698 (TELGKKSSPQ…VDFINRAKNE (345 aa)) form a binds bovine IgG2 Fc region. Disordered regions lie at residues 3357–3415 (GKKS…PSVP) and 3432–3454 (AELK…ATGV). Composition is skewed to polar residues over residues 3360 to 3379 (SSPQ…SPVT) and 3388 to 3401 (VENT…TIKQ). Residues 3443–3454 (KAAEKSEGATGV) are compositionally biased toward basic and acidic residues. Residues 3535–3557 (IPEATVKQMSHLPEFDDILTEGA) form an arm region region. A Fido 2 domain is found at 3640 to 3777 (LTVQMIENLN…SEVVVEFLKE (138 aa)). ATP is bound by residues 3670–3671 (KE), 3722–3724 (GNG), R3728, and Q3757. The segment covering 3783 to 3798 (SKEDNEQNLEKTDRTS) has biased composition (basic and acidic residues). A disordered region spans residues 3783 to 3829 (SKEDNEQNLEKTDRTSTDLTESAVENSAALSSGTVRSATVSETVTET). Residues 3799–3815 (TDLTESAVENSAALSSG) show a composition bias toward polar residues. Over residues 3816–3829 (TVRSATVSETVTET) the composition is skewed to low complexity. Active-site for cysteine protease activity residues include C3910, H4033, and D4048.

It in the central section; belongs to the fic family. The protein in the C-terminal section; belongs to the peptidase C58 family. As to quaternary structure, immunoglobulin-binding protein. The long form of the protein is probably processed, and/or the transcript may be subject to differential translational initiation.

Its subcellular location is the secreted. The protein resides in the cell outer membrane. The catalysed reaction is L-tyrosyl-[protein] + ATP = O-(5'-adenylyl)-L-tyrosyl-[protein] + diphosphate. It catalyses the reaction L-threonyl-[protein] + ATP = 3-O-(5'-adenylyl)-L-threonyl-[protein] + diphosphate. Its function is as follows. Adenylyltransferase involved in virulence by mediating the addition of adenosine 5'-monophosphate (AMP) to specific tyrosine residue of host Rho GTPases RhoA, Rac and Cdc42. The resulting AMPylation inactivates Rho GTPases, thereby inhibiting actin assembly in infected cells. Probably also acts as a cysteine protease, which may play a central role after invasion of host cell and in virulence. Possible member (with IbpB) of a 2 partner secretion. Probably able to bind bovine epithelial cells (host cells). May participate in the formation of fibrils at the surface of the bacteria. The chain is Protein adenylyltransferase and cysteine protease IbpA (ibpA) from Histophilus somni (strain 2336) (Haemophilus somnus).